An 88-amino-acid polypeptide reads, in one-letter code: Small ribosomal subunit protein bS20 (88 aa).

Belongs to the bacterial ribosomal protein bS20 family.

Binds directly to 16S ribosomal RNA. This Clostridium kluyveri (strain NBRC 12016) protein is Small ribosomal subunit protein bS20.